A 122-amino-acid polypeptide reads, in one-letter code: Non-specific lipid-transfer protein (122 aa).

The first 19 residues, 1-19, serve as a signal peptide directing secretion; sequence MGVSRACFVVMVVVYMVVA. Residues 20–29 constitute a propeptide that is removed on maturation; the sequence is ATPNVKLAEA. 4 cysteine pairs are disulfide-bonded: Cys32–Cys81, Cys42–Cys58, Cys59–Cys104, and Cys79–Cys118.

As to quaternary structure, monomer.

Functionally, plant non-specific lipid-transfer proteins transfer phospholipids as well as galactolipids across membranes. May play a role in wax or cutin deposition in the cell walls of expanding epidermal cells and certain secretory tissues. Binds saturated fatty acids, unsaturated fatty acids, lysolipids and, with highest efficiency, jasmonic acid. Has weak antimicrobial activity against fungi. Inhibits spore germination and hyphae elongation in A.niger VKM F-2259 and N.crassa VKM F-184. Has no antibacterial activity against A.tumefaciens A281, C.michiganensis VKM Ac-144 and P.syringae VKM B-1546. The protein is Non-specific lipid-transfer protein of Anethum graveolens (Dill).